Consider the following 210-residue polypeptide: Thymidylate kinase (210 aa).

14 to 21 (GLDRSGKS) lines the ATP pocket.

The protein belongs to the thymidylate kinase family.

The catalysed reaction is dTMP + ATP = dTDP + ADP. It functions in the pathway pyrimidine metabolism; dTTP biosynthesis. Its function is as follows. Catalyzes the conversion of dTMP to dTDP. In Schizosaccharomyces pombe (strain 972 / ATCC 24843) (Fission yeast), this protein is Thymidylate kinase (tmp1).